We begin with the raw amino-acid sequence, 358 residues long: DNA polymerase IV (358 aa).

Residues 4–185 (IIHIDMDCYF…LSLRKIPGVG (182 aa)) enclose the UmuC domain. Aspartate 8 and aspartate 103 together coordinate Mg(2+). The active site involves glutamate 104.

It belongs to the DNA polymerase type-Y family. In terms of assembly, monomer. Requires Mg(2+) as cofactor.

Its subcellular location is the cytoplasm. It catalyses the reaction DNA(n) + a 2'-deoxyribonucleoside 5'-triphosphate = DNA(n+1) + diphosphate. Functionally, poorly processive, error-prone DNA polymerase involved in untargeted mutagenesis. Copies undamaged DNA at stalled replication forks, which arise in vivo from mismatched or misaligned primer ends. These misaligned primers can be extended by PolIV. Exhibits no 3'-5' exonuclease (proofreading) activity. May be involved in translesional synthesis, in conjunction with the beta clamp from PolIII. This is DNA polymerase IV from Shewanella baltica (strain OS185).